Consider the following 185-residue polypeptide: Ribosome-recycling factor (185 aa).

It belongs to the RRF family.

The protein localises to the cytoplasm. In terms of biological role, responsible for the release of ribosomes from messenger RNA at the termination of protein biosynthesis. May increase the efficiency of translation by recycling ribosomes from one round of translation to another. The polypeptide is Ribosome-recycling factor (Salmonella arizonae (strain ATCC BAA-731 / CDC346-86 / RSK2980)).